Consider the following 1048-residue polypeptide: Copper-dependent transcription factor 1 (1048 aa).

Positions 1–40 (MVLINDKKFACEKCIKGHRVSACTHTDRPLFEVKKKGRPS) form a DNA-binding region, copper-fist. 4 residues coordinate Zn(2+): C11, C14, C23, and H25. Residues 85–99 (ANESGGASATANTSA) are compositionally biased toward low complexity. 2 disordered regions span residues 85–117 (ANES…PTFP) and 178–273 (HSGH…RPPV). The span at 211-222 (TRNSPTSINSSE) shows a compositional bias: polar residues. A CRM-I motif is present at residues 348 to 362 (CMCGDDCSCPGCATH). Residues 455-482 (CCGGKCGCPPGECACTKQCCGCCGECTC) carry the CRM-II motif. Disordered regions lie at residues 506-702 (SSCG…PLNS) and 835-876 (GPSG…WKFP). 5 stretches are compositionally biased toward polar residues: residues 527-536 (QIPQSVSPTS), 550-565 (PVST…SFNT), 629-645 (GSMT…GVRR), 664-682 (SIQS…SNQI), and 692-702 (APSQMTAPLNS). Low complexity predominate over residues 835–845 (GPSGPSAIPAT). The span at 846–868 (NIPSRHTTPQASRPLTPPESSFT) shows a compositional bias: polar residues.

It is found in the nucleus. Its subcellular location is the cytoplasm. The protein localises to the cell cortex. Transcription factor that regulates copper acquisition and homeostasis, and which plays a central role in fungal pathogenesis during neurologic infection. The transcriptional regulation exerted by CUF1 is intrinsically complex since it acts as a dual sensor of copper levels, responsible for expression of a set of copper-specific copper transporters, CTR1 and CTR4, at low copper concentrations, and 2 metallothioneins, CMT1 and CMT2, at high copper concentrations. Positively regulates the expression of the copper acquisition factor BIM1 under copper-limiting conditions. Also positively regulates the expression of super oxide dismutase SOD2 isoform 2 during oxidative stress and copper-limiting conditions. Negatively regulates the expression of super oxide dismutase SOD1 during copper-limiting conditions. Also regulates ATM1, an ABC transporter with functions in the iron-sulfur clusters (ISC) export machinery, during copper stress. Another target of CUF1 is the gene encoding the laccase LAC1. Binds promoters of target genes at Cu-responsive elements (CuREs) that contain a variable A/T rich 5' region followed by the core consensus sequence 5'-G(G/C)CTC(A/G)-3'. Negatively regulates capsule biosynthesis, probably via modulating iron acquisition through the high-affinity iron uptake pathway. The protein is Copper-dependent transcription factor 1 of Cryptococcus neoformans var. grubii serotype A (strain H99 / ATCC 208821 / CBS 10515 / FGSC 9487) (Filobasidiella neoformans var. grubii).